The sequence spans 368 residues: DNA integrity scanning protein DisA (368 aa).

The 139-residue stretch at 15–153 folds into the DAC domain; the sequence is DERLRATLAA…DGRRHVLDEP (139 aa). Residues Gly82, Leu100, and 113–117 each bind ATP; that span reads TRHRS. Residues 101–121 form a disordered region; the sequence is QPDPSIPTNESGTRHRSAERT. A compositionally biased stretch (basic and acidic residues) spans 112–121; sequence GTRHRSAERT.

This sequence belongs to the DisA family. Homooctamer. Requires Mg(2+) as cofactor.

It catalyses the reaction 2 ATP = 3',3'-c-di-AMP + 2 diphosphate. Its function is as follows. Participates in a DNA-damage check-point. DisA forms globular foci that rapidly scan along the chromosomes searching for lesions. In terms of biological role, also has diadenylate cyclase activity, catalyzing the condensation of 2 ATP molecules into cyclic di-AMP (c-di-AMP). c-di-AMP likely acts as a signaling molecule that may couple DNA integrity with a cellular process. This is DNA integrity scanning protein DisA from Acidothermus cellulolyticus (strain ATCC 43068 / DSM 8971 / 11B).